Reading from the N-terminus, the 302-residue chain is Giardin subunit alpha-5 (302 aa).

Annexin repeat units lie at residues 1-72, 74-144, 153-226, and 230-298; these read MTST…VNMW, SRHE…VAGW, GSVE…AAHF, and GLPV…TLWR.

The protein belongs to the annexin family. Giardin subunit alpha subfamily.

The protein localises to the cytoplasm. The protein resides in the cytoskeleton. In terms of biological role, giardins are involved in parasite attachment to the intestinal mucosa and in the cytoskeletal disassembly and reassembly that marks the transition from infectious trophozoite to transmissible cyst. They may interact with other cytoskeletal proteins such as microtubules in the microribbons or crossbridges, to maintain the integrity of the ventral disk. The polypeptide is Giardin subunit alpha-5 (Giardia intestinalis (Giardia lamblia)).